The following is a 193-amino-acid chain: Holliday junction branch migration complex subunit RuvA (193 aa).

The domain I stretch occupies residues 1-64; the sequence is MIGRIAGILL…EDAHLLYGFL (64 aa). The tract at residues 65 to 139 is domain II; sequence TQQERTTFRE…GKLGADLGAL (75 aa). A flexible linker region spans residues 139-143; that stretch reads LAGAA. Residues 144-193 are domain III; sequence SPSDHATDILNALLALGYSEKEGLAAIKNVPAGTGVSEGIKLALKALSKA.

The protein belongs to the RuvA family. As to quaternary structure, homotetramer. Forms an RuvA(8)-RuvB(12)-Holliday junction (HJ) complex. HJ DNA is sandwiched between 2 RuvA tetramers; dsDNA enters through RuvA and exits via RuvB. An RuvB hexamer assembles on each DNA strand where it exits the tetramer. Each RuvB hexamer is contacted by two RuvA subunits (via domain III) on 2 adjacent RuvB subunits; this complex drives branch migration. In the full resolvosome a probable DNA-RuvA(4)-RuvB(12)-RuvC(2) complex forms which resolves the HJ.

Its subcellular location is the cytoplasm. Its function is as follows. The RuvA-RuvB-RuvC complex processes Holliday junction (HJ) DNA during genetic recombination and DNA repair, while the RuvA-RuvB complex plays an important role in the rescue of blocked DNA replication forks via replication fork reversal (RFR). RuvA specifically binds to HJ cruciform DNA, conferring on it an open structure. The RuvB hexamer acts as an ATP-dependent pump, pulling dsDNA into and through the RuvAB complex. HJ branch migration allows RuvC to scan DNA until it finds its consensus sequence, where it cleaves and resolves the cruciform DNA. In Burkholderia cenocepacia (strain ATCC BAA-245 / DSM 16553 / LMG 16656 / NCTC 13227 / J2315 / CF5610) (Burkholderia cepacia (strain J2315)), this protein is Holliday junction branch migration complex subunit RuvA.